A 245-amino-acid chain; its full sequence is tRNA (guanine-N(7)-)-methyltransferase (245 aa).

S-adenosyl-L-methionine is bound by residues Gly70, 93–94 (EI), 126–127 (NA), and Leu146. Residue Asp149 is part of the active site. 224-226 (SEE) is a binding site for S-adenosyl-L-methionine.

It belongs to the class I-like SAM-binding methyltransferase superfamily. TrmB family.

The protein resides in the nucleus. It catalyses the reaction guanosine(46) in tRNA + S-adenosyl-L-methionine = N(7)-methylguanosine(46) in tRNA + S-adenosyl-L-homocysteine. It participates in tRNA modification; N(7)-methylguanine-tRNA biosynthesis. Its function is as follows. Catalyzes the formation of N(7)-methylguanine at position 46 (m7G46) in tRNA. This Aedes aegypti (Yellowfever mosquito) protein is tRNA (guanine-N(7)-)-methyltransferase.